Here is a 612-residue protein sequence, read N- to C-terminus: Mineralocorticoid receptor (612 aa).

The segment at 1–228 is modulating; it reads GNEIADSTVS…STGPSRPSKV (228 aa). Cys-229, Cys-232, Cys-246, Cys-249, Cys-269, Cys-275, Cys-285, and Cys-288 together coordinate Zn(2+). 2 NR C4-type zinc fingers span residues 229–249 and 269–293; these read CLVC…CGSC and CAGR…LQKC. The nuclear receptor DNA-binding region spans 229–298; the sequence is CLVCGDEASG…RLQKCLQAGM (70 aa). The tract at residues 299–349 is hinge; sequence NLGARKSKKLGKLKGVHEEHPQQPLQQTPTASPKEDTTLTSSSKEPSANSN. Residues 310–348 are disordered; it reads KLKGVHEEHPQQPLQQTPTASPKEDTTLTSSSKEPSANS. The span at 339-348 shows a compositional bias: low complexity; the sequence is SSSKEPSANS. The region spanning 350–592 is the NR LBD domain; that stretch reads SLVPLISAVS…EFPAMLVEII (243 aa). 21-hydroxyprogesterone contacts are provided by Asn-398 and Gln-404. Aldosterone-binding residues include Asn-398 and Gln-404. Residues Asn-398 and Gln-404 each coordinate progesterone. The important for coactivator binding stretch occupies residues 410 to 413; sequence KWAK. Arg-445 and Thr-573 together coordinate 21-hydroxyprogesterone. Residues Arg-445 and Thr-573 each coordinate aldosterone. Arg-445 and Thr-573 together coordinate progesterone.

The protein belongs to the nuclear hormone receptor family. NR3 subfamily.

The protein localises to the cytoplasm. It is found in the nucleus. In terms of biological role, receptor for both mineralocorticoids (MC) such as aldosterone and glucocorticoids (GC) such as corticosterone or cortisol. Binds to mineralocorticoid response elements (MRE) and transactivates target genes. The effect of MC is to increase ion and water transport and thus raise extracellular fluid volume and blood pressure and lower potassium levels. The sequence is that of Mineralocorticoid receptor (nr3c2) from Xenopus laevis (African clawed frog).